The primary structure comprises 115 residues: Ribonuclease P protein component (115 aa).

This sequence belongs to the RnpA family. In terms of assembly, consists of a catalytic RNA component (M1 or rnpB) and a protein subunit.

It carries out the reaction Endonucleolytic cleavage of RNA, removing 5'-extranucleotides from tRNA precursor.. RNaseP catalyzes the removal of the 5'-leader sequence from pre-tRNA to produce the mature 5'-terminus. It can also cleave other RNA substrates such as 4.5S RNA. The protein component plays an auxiliary but essential role in vivo by binding to the 5'-leader sequence and broadening the substrate specificity of the ribozyme. In Bacillus mycoides (strain KBAB4) (Bacillus weihenstephanensis), this protein is Ribonuclease P protein component.